The following is a 418-amino-acid chain: UDP-N-acetylglucosamine 1-carboxyvinyltransferase 1 (418 aa).

22–23 (KN) is a phosphoenolpyruvate binding site. UDP-N-acetyl-alpha-D-glucosamine is bound at residue Arg94. Catalysis depends on Cys118, which acts as the Proton donor. Cys118 is subject to 2-(S-cysteinyl)pyruvic acid O-phosphothioketal. UDP-N-acetyl-alpha-D-glucosamine contacts are provided by residues 123-127 (RPIDL), Asp306, and Ile328.

This sequence belongs to the EPSP synthase family. MurA subfamily.

It is found in the cytoplasm. The enzyme catalyses phosphoenolpyruvate + UDP-N-acetyl-alpha-D-glucosamine = UDP-N-acetyl-3-O-(1-carboxyvinyl)-alpha-D-glucosamine + phosphate. It participates in cell wall biogenesis; peptidoglycan biosynthesis. Functionally, cell wall formation. Adds enolpyruvyl to UDP-N-acetylglucosamine. This Clostridium acetobutylicum (strain ATCC 824 / DSM 792 / JCM 1419 / IAM 19013 / LMG 5710 / NBRC 13948 / NRRL B-527 / VKM B-1787 / 2291 / W) protein is UDP-N-acetylglucosamine 1-carboxyvinyltransferase 1.